The sequence spans 221 residues: 3-phospho-D-glycerate guanylyltransferase (221 aa).

The protein belongs to the CofC family.

It carries out the reaction (2R)-3-phosphoglycerate + GTP + H(+) = 3-[(R)-glyceryl]-diphospho-5'-guanosine + diphosphate. It catalyses the reaction (2S)-2-phospholactate + GTP + H(+) = (2S)-lactyl-2-diphospho-5'-guanosine + diphosphate. The protein operates within cofactor biosynthesis; coenzyme F420 biosynthesis. Guanylyltransferase that catalyzes the activation of (2R)-3-phosphoglycerate (3PG) as 3-[(R)-glyceryl]-diphospho-5'-guanosine, via the condensation of 3PG with GTP. It is involved in the biosynthesis of a derivative of the hydride carrier cofactor coenzyme F420, 3PG-F420. Can also use (2S)-2-phospholactate (2-PL), with lower turnover, and has weak activity with phosphoenolpyruvate (PEP). This is 3-phospho-D-glycerate guanylyltransferase from Mycetohabitans rhizoxinica (strain DSM 19002 / CIP 109453 / HKI 454) (Paraburkholderia rhizoxinica).